Consider the following 365-residue polypeptide: Histidinol-phosphate aminotransferase (365 aa).

Residue lysine 222 is modified to N6-(pyridoxal phosphate)lysine.

This sequence belongs to the class-II pyridoxal-phosphate-dependent aminotransferase family. Histidinol-phosphate aminotransferase subfamily. In terms of assembly, homodimer. Pyridoxal 5'-phosphate is required as a cofactor.

It catalyses the reaction L-histidinol phosphate + 2-oxoglutarate = 3-(imidazol-4-yl)-2-oxopropyl phosphate + L-glutamate. The protein operates within amino-acid biosynthesis; L-histidine biosynthesis; L-histidine from 5-phospho-alpha-D-ribose 1-diphosphate: step 7/9. The protein is Histidinol-phosphate aminotransferase of Geobacillus sp. (strain WCH70).